The primary structure comprises 694 residues: Lon-like protease BrxL (694 aa).

This sequence belongs to the BrxL family.

Its function is as follows. BREX systems (bacteriophage exclusion) provide immunity against bacteriophage. Part of a type 1 BREX system which protects against dsDNA phage. This system allows phage adsorption but prevents phage DNA replication, without degradation of the phage DNA. Methylation of bacterial DNA by PglX guides self/non-self discrimination. When the brxA-brxB-brxC-pglX-pglZ-brxL genes are transformed into a susceptible E.coli strain (BW25113) they confer very high resistance to infection by bacteriophage VR7 and VpaE1, about 100-fold protection against lambda, T5 and T7 and no protection against RNA phage Qbeta, ssDNA phage M13 or dSDNA phage T4 and VR5. Glycosylated phage DNA is not susceptible to BREX. The BREX system does not confer resistance to lysogenic lambda phage, i.e. prophage that are integrated into the chromosomal DNA and then induced to form phage. Expression of this protein alone is toxic. The chain is Lon-like protease BrxL from Escherichia coli O9:H4 (strain HS).